Reading from the N-terminus, the 1318-residue chain is Serine/threonine-protein kinase ppk18 (1318 aa).

The segment at 431 to 485 (PSVSPEEVHDISQFNHRNDPPITAASVDSSNSFSVHRSSTNHSSTNSGSPNLSRR) is disordered. Low complexity predominate over residues 462–479 (SFSVHRSSTNHSSTNSGS). The Protein kinase domain maps to 566–934 (YEIIKPISKG…INEIKEHPFF (369 aa)). ATP-binding positions include 572-580 (ISKGTFGTV) and Lys595. Asp690 (proton acceptor) is an active-site residue. One can recognise an AGC-kinase C-terminal domain in the interval 935–1044 (NGINWDDIFS…KNLSVLERAN (110 aa)). 3 disordered regions span residues 968–1022 (GAAE…FSEA), 1058–1078 (KLHI…DMPS), and 1091–1127 (SLMT…GPKS). The segment covering 972–1000 (SNMSSSVNSGEEVSKDNNVSQERGSQFLR) has biased composition (polar residues). Positions 1091-1115 (SLMTNQGSNFSSTDSTPRKSINSSD) are enriched in polar residues. The segment covering 1116–1127 (VESRSKTDGPKS) has biased composition (basic and acidic residues). The Response regulatory domain maps to 1200–1316 (KALICVSKLN…LLRGYIARLC (117 aa)).

Belongs to the protein kinase superfamily. Ser/Thr protein kinase family.

It localises to the cytoplasm. It carries out the reaction L-seryl-[protein] + ATP = O-phospho-L-seryl-[protein] + ADP + H(+). The enzyme catalyses L-threonyl-[protein] + ATP = O-phospho-L-threonyl-[protein] + ADP + H(+). This Schizosaccharomyces pombe (strain 972 / ATCC 24843) (Fission yeast) protein is Serine/threonine-protein kinase ppk18 (ppk18).